A 334-amino-acid polypeptide reads, in one-letter code: MRIGHHQLTNCLIAAPMAGITDRPFRTLCHAMGAGMAVSEMLSSNPEVWRTDKSRLRMVHSDEPGIRSVQIAGCDPDDMAAAARINVASGAQLIDINMGCPAKKVNRKLAGSALLQYPDLVKRILHAVVDAVDVPVTLKIRTGWAPEHRNCVEIAQLAEDCGIQALTIHGRTRACLFNGDAEYDSIRAVKQSVSIPIIANGDITDPHKARAVLDYTGADALMIGRAAQGRPWIFREIQHYLDTGELLPPLPLGEVKRLLIGHIRELHGFYGQGKGFRIARKHVSWYLQEHAPNDQFRRTFNAIEDASEQLEALEAYFENLSVKKELTELCSNNE.

FMN is bound by residues 16 to 18 (PMA) and Gln70. Residue Cys100 is the Proton donor of the active site. Residues Lys139, 200–202 (NGD), and 224–225 (GR) each bind FMN.

This sequence belongs to the Dus family. DusB subfamily. FMN is required as a cofactor.

It catalyses the reaction a 5,6-dihydrouridine in tRNA + NAD(+) = a uridine in tRNA + NADH + H(+). The catalysed reaction is a 5,6-dihydrouridine in tRNA + NADP(+) = a uridine in tRNA + NADPH + H(+). Functionally, catalyzes the synthesis of 5,6-dihydrouridine (D), a modified base found in the D-loop of most tRNAs, via the reduction of the C5-C6 double bond in target uridines. In Serratia marcescens, this protein is tRNA-dihydrouridine synthase B.